Reading from the N-terminus, the 318-residue chain is Thioredoxin reductase (318 aa).

36–43 is a binding site for FAD; it reads TGLQQGGQ. C136 and C139 are oxidised to a cystine. 286–295 is a binding site for FAD; it reads DVMDHNYRQA.

Belongs to the class-II pyridine nucleotide-disulfide oxidoreductase family. As to quaternary structure, homodimer. FAD is required as a cofactor.

It is found in the cytoplasm. The catalysed reaction is [thioredoxin]-dithiol + NADP(+) = [thioredoxin]-disulfide + NADPH + H(+). The polypeptide is Thioredoxin reductase (trxB) (Haemophilus influenzae (strain ATCC 51907 / DSM 11121 / KW20 / Rd)).